The primary structure comprises 95 residues: Aspartyl/glutamyl-tRNA(Asn/Gln) amidotransferase subunit C (95 aa).

This sequence belongs to the GatC family. In terms of assembly, heterotrimer of A, B and C subunits.

The enzyme catalyses L-glutamyl-tRNA(Gln) + L-glutamine + ATP + H2O = L-glutaminyl-tRNA(Gln) + L-glutamate + ADP + phosphate + H(+). It catalyses the reaction L-aspartyl-tRNA(Asn) + L-glutamine + ATP + H2O = L-asparaginyl-tRNA(Asn) + L-glutamate + ADP + phosphate + 2 H(+). Its function is as follows. Allows the formation of correctly charged Asn-tRNA(Asn) or Gln-tRNA(Gln) through the transamidation of misacylated Asp-tRNA(Asn) or Glu-tRNA(Gln) in organisms which lack either or both of asparaginyl-tRNA or glutaminyl-tRNA synthetases. The reaction takes place in the presence of glutamine and ATP through an activated phospho-Asp-tRNA(Asn) or phospho-Glu-tRNA(Gln). This is Aspartyl/glutamyl-tRNA(Asn/Gln) amidotransferase subunit C from Pseudomonas syringae pv. syringae (strain B728a).